Here is a 499-residue protein sequence, read N- to C-terminus: L-arabinose isomerase (499 aa).

The Mn(2+) site is built by Glu306, Glu333, His350, and His449.

Belongs to the arabinose isomerase family. The cofactor is Mn(2+).

The enzyme catalyses beta-L-arabinopyranose = L-ribulose. It participates in carbohydrate degradation; L-arabinose degradation via L-ribulose; D-xylulose 5-phosphate from L-arabinose (bacterial route): step 1/3. Catalyzes the conversion of L-arabinose to L-ribulose. The sequence is that of L-arabinose isomerase from Aeromonas salmonicida (strain A449).